A 341-amino-acid chain; its full sequence is Glycerol-3-phosphate dehydrogenase [NAD(P)+] (341 aa).

4 residues coordinate NADPH: Ser-14, Phe-15, Arg-35, and Lys-108. Sn-glycerol 3-phosphate-binding residues include Lys-108 and Gly-136. NADPH is bound at residue Ala-140. Sn-glycerol 3-phosphate-binding residues include Lys-191, Asp-244, Ser-254, Arg-255, and Asn-256. Lys-191 serves as the catalytic Proton acceptor. Arg-255 serves as a coordination point for NADPH. Residues Val-279 and Glu-281 each coordinate NADPH.

It belongs to the NAD-dependent glycerol-3-phosphate dehydrogenase family.

Its subcellular location is the cytoplasm. The enzyme catalyses sn-glycerol 3-phosphate + NAD(+) = dihydroxyacetone phosphate + NADH + H(+). It carries out the reaction sn-glycerol 3-phosphate + NADP(+) = dihydroxyacetone phosphate + NADPH + H(+). It functions in the pathway membrane lipid metabolism; glycerophospholipid metabolism. Its function is as follows. Catalyzes the reduction of the glycolytic intermediate dihydroxyacetone phosphate (DHAP) to sn-glycerol 3-phosphate (G3P), the key precursor for phospholipid synthesis. The sequence is that of Glycerol-3-phosphate dehydrogenase [NAD(P)+] from Pseudomonas putida (strain ATCC 47054 / DSM 6125 / CFBP 8728 / NCIMB 11950 / KT2440).